We begin with the raw amino-acid sequence, 157 residues long: Class-10 pathogenesis-related protein 1 (157 aa).

The protein belongs to the BetVI family. As to expression, expressed in roots. Detected in nodules and leaves, but not in stems and flowers.

The protein is Class-10 pathogenesis-related protein 1 (PR10-1) of Medicago truncatula (Barrel medic).